A 315-amino-acid polypeptide reads, in one-letter code: Replication-associated protein VP4 (315 aa).

Residues Y176 and Y180 each act as O-(5'-phospho-DNA)-tyrosine intermediate in the active site. Residues 253–315 (EYDAKVKLKS…FKQLQEKLKL (63 aa)) adopt a coiled-coil conformation.

It belongs to the microviridae Rep protein family.

The enzyme catalyses ATP + (deoxyribonucleotide)n-3'-hydroxyl + 5'-phospho-(deoxyribonucleotide)m = (deoxyribonucleotide)n+m + AMP + diphosphate.. Functionally, plays an essential role in viral DNA replication. Binds the origin of replication and cleaves the dsDNA replicative form I (RFI) and becomes covalently bound to it via phosphotyrosine bond, generating the dsDNA replicative form II (RFII). In turn, viral DNA replication initiates at the 3'-OH of the cleavage site. After one round of rolling circle synthesis, protein VP4 is linked to the newly synthesized ssDNA and joins the ends of the displaced strand to generate a circular single-stranded molecule ready to be packed into a virion. In Bdellovibrio bacteriovorus (Bacteriophage phiMH2K), this protein is Replication-associated protein VP4.